A 212-amino-acid polypeptide reads, in one-letter code: Peroxisomal membrane protein 4 (212 aa).

2 helical membrane passes run 97–117 and 151–171; these read GGTH…LLFG and LKWD…LWLF. N-linked (GlcNAc...) asparagine glycosylation occurs at Asn206.

The protein belongs to the peroxisomal membrane protein PXMP2/4 family. In terms of assembly, interacts with PEX19. In terms of tissue distribution, liver.

The protein resides in the peroxisome membrane. This chain is Peroxisomal membrane protein 4 (Pxmp4), found in Rattus norvegicus (Rat).